A 687-amino-acid chain; its full sequence is MAVLCPARVSVAENKKFKLHTLSAMMMGLFTGSFAYAETQNTSNQEQEMPVLVVIGEKTQRSIYETSASVEVFDQDTIERTPGATEIDDLLQLIPNLVDSGQSNNMPTIRGIDGSGPSVGGLASFAGTSPRLNMSIDGRSLTYSEIAFGPRSLWDMQQVEIYLGPQSYIQGRNTSAGAIVMKSNDPTHHFESAVKAGIGESDYSQTAGMISAPIIQDELAFRLSFDQQKRDSFVDLAAFEPAGDPKKIEMNSVRGKLLYEPSALDGFKTTLTLSHMDSRGPQTENINVAGNEAFRPVYETASFTTAWDIIWHLNDLFTFENNLVYADFSYDRYTNPNSRGDFNTDGKEFHIEPLLRYIALDGSVNTLIGARYYQSSQDDMYIDAASAYPMDGRTKAKSVFAEVTYALTPSINVNLAGRFEREQVKRNVSHPRYKLDYDETSSVFLPKLDVAYTPVQGQTYGIKAAKGYNASGAGLAFNSMQFTGFRPYEFEQESIWNYEFYTRHRFSHSVEVLTNLFYNDFDSMQMTQTTSSGDVFIANLDEASTYGAEIGSRWYATSSLELFANLGLLKTEFKETTGNTKELPRAPKMSANVGLLYDFGQGFEFSSNAAYTGSYFSESGNSEKFAIDSYWVANAQLAYVFEHGRATLYATNLLDSDKTTLYLSTNNTLDQLKQQPRMIGASVQLNF.

The signal sequence occupies residues 1 to 37 (MAVLCPARVSVAENKKFKLHTLSAMMMGLFTGSFAYA). The 123-residue stretch at 62 to 184 (SIYETSASVE…SAGAIVMKSN (123 aa)) folds into the TBDR plug domain. Positions 189–687 (HFESAVKAGI…MIGASVQLNF (499 aa)) constitute a TBDR beta-barrel domain.

The protein belongs to the TonB-dependent receptor family.

It localises to the cell outer membrane. In terms of biological role, involved in the uptake of iron in complex with vibriobactin, a catecholate siderophore synthesized by V.cholerae. Binds and transports ferric vibriobactin across the outer membrane. The energy source is provided by the inner membrane TonB system. The polypeptide is Ferric vibriobactin receptor ViuA (Vibrio cholerae serotype O1 (strain ATCC 39541 / Classical Ogawa 395 / O395)).